A 146-amino-acid polypeptide reads, in one-letter code: Large ribosomal subunit protein uL16 (146 aa).

It belongs to the universal ribosomal protein uL16 family. As to quaternary structure, part of the 50S ribosomal subunit.

Binds 23S rRNA and is also seen to make contacts with the A and possibly P site tRNAs. This Lactobacillus helveticus (strain DPC 4571) protein is Large ribosomal subunit protein uL16.